Reading from the N-terminus, the 202-residue chain is 3-isopropylmalate dehydratase small subunit (202 aa).

This sequence belongs to the LeuD family. LeuD type 1 subfamily. In terms of assembly, heterodimer of LeuC and LeuD.

It carries out the reaction (2R,3S)-3-isopropylmalate = (2S)-2-isopropylmalate. It functions in the pathway amino-acid biosynthesis; L-leucine biosynthesis; L-leucine from 3-methyl-2-oxobutanoate: step 2/4. Its function is as follows. Catalyzes the isomerization between 2-isopropylmalate and 3-isopropylmalate, via the formation of 2-isopropylmaleate. In Buchnera aphidicola subsp. Pemphigus spyrothecae, this protein is 3-isopropylmalate dehydratase small subunit.